Reading from the N-terminus, the 143-residue chain is Transcriptional regulator MraZ (143 aa).

2 SpoVT-AbrB domains span residues 5 to 47 (TYTP…PRAE) and 76 to 119 (TDEQ…DAQA).

This sequence belongs to the MraZ family. As to quaternary structure, forms oligomers.

The protein localises to the cytoplasm. Its subcellular location is the nucleoid. The chain is Transcriptional regulator MraZ from Mycobacterium avium (strain 104).